The following is a 407-amino-acid chain: Probable tRNA sulfurtransferase (407 aa).

The region spanning 61 to 165 (NEITYRLSKI…LDAIYMYEEV (105 aa)) is the THUMP domain. ATP-binding positions include 183–184 (ML), 208–209 (HF), R265, G287, and Q296.

The protein belongs to the ThiI family.

Its subcellular location is the cytoplasm. The catalysed reaction is [ThiI sulfur-carrier protein]-S-sulfanyl-L-cysteine + a uridine in tRNA + 2 reduced [2Fe-2S]-[ferredoxin] + ATP + H(+) = [ThiI sulfur-carrier protein]-L-cysteine + a 4-thiouridine in tRNA + 2 oxidized [2Fe-2S]-[ferredoxin] + AMP + diphosphate. It carries out the reaction [ThiS sulfur-carrier protein]-C-terminal Gly-Gly-AMP + S-sulfanyl-L-cysteinyl-[cysteine desulfurase] + AH2 = [ThiS sulfur-carrier protein]-C-terminal-Gly-aminoethanethioate + L-cysteinyl-[cysteine desulfurase] + A + AMP + 2 H(+). It functions in the pathway cofactor biosynthesis; thiamine diphosphate biosynthesis. In terms of biological role, catalyzes the ATP-dependent transfer of a sulfur to tRNA to produce 4-thiouridine in position 8 of tRNAs, which functions as a near-UV photosensor. Also catalyzes the transfer of sulfur to the sulfur carrier protein ThiS, forming ThiS-thiocarboxylate. This is a step in the synthesis of thiazole, in the thiamine biosynthesis pathway. The sulfur is donated as persulfide by IscS. The polypeptide is Probable tRNA sulfurtransferase (Staphylococcus aureus (strain N315)).